Reading from the N-terminus, the 248-residue chain is Mannose-binding protein C (248 aa).

The first 20 residues, 1-20 (MSLFPSLPLLLLSMVAASYS), serve as a signal peptide directing secretion. Residues 42 to 99 (GINGFPGKDGRDGTKGEKGEPGQGLRGLQGPPGKLGPPGNPGPSGSPGPKGQKGDPGK) form the Collagen-like domain. Residues 43 to 113 (INGFPGKDGR…DSSLAASERK (71 aa)) form a disordered region. P47 carries the hydroxyproline modification. The segment covering 49–61 (KDGRDGTKGEKGE) has biased composition (basic and acidic residues). Residues P73, P79, P82, and P88 each carry the hydroxyproline modification. Over residues 75–87 (KLGPPGNPGPSGS) the composition is skewed to pro residues. The span at 93–102 (QKGDPGKSPD) shows a compositional bias: basic and acidic residues. A coiled-coil region spans residues 112–130 (RKALQTEMARIKKWLTFSL). The C-type lectin domain occupies 134–245 (VGNKFFLTNG…CSTSHLAVCE (112 aa)). Disulfide bonds link C155–C244 and C222–C236.

Oligomeric complex of 3 or more homotrimers. Interacts with MASP1 and MASP2. Interacts with MEP1A and MEP1B and may inhibit their catalytic activity. Interacts with CR1 (via Sushi 24 and Sushi 25 domains). As to quaternary structure, (Microbial infection) Interacts with SARS coronavirus-2/SARS-CoV-2 Spike glycoprotein homotrimer; the interaction is calcium-dependent and modulated by Spike glycoprotein glycosylation state. Plasma protein produced mainly in the liver.

The protein localises to the secreted. In terms of biological role, calcium-dependent lectin involved in innate immune defense. Binds mannose, fucose and N-acetylglucosamine on different microorganisms and activates the lectin complement pathway. Binds to late apoptotic cells, as well as to apoptotic blebs and to necrotic cells, but not to early apoptotic cells, facilitating their uptake by macrophages. May bind DNA. Upon SARS coronavirus-2/SARS-CoV-2 infection, activates the complement lectin pathway which leads to the inhibition SARS-CoV-2 infection and a reduction of the induced inflammatory response. The sequence is that of Mannose-binding protein C from Homo sapiens (Human).